The chain runs to 275 residues: MAVKDRYMSKIKQETKPWIKRFGRLGYFAFGGVFILLGVLAFMTAAGAGRAKDSSGALQTLSRMPYGSLLLFFIGIGLIGYVIWMVLSAIKDTEGHGNSRRGLSRRIGNFFSAAVYTSIAWNALRFVFGQGDGGTSEQTWSAYVLAQPFGQWLTGLTGAGFIVFAIVQFMKGVRAAFMKEFDTSKMNKQMICITKNTGRAGNIARAIIFSAIGYFLIKTAMTADPDDTRGFDGALAELAQQPHGKLILSILALGLILYGMYAIMKGIYQHMTWEK.

6 consecutive transmembrane segments (helical) span residues Leu-25–Ala-45, Leu-70–Ile-90, Ile-107–Val-127, Phe-149–Phe-169, Ile-203–Ala-223, and Ile-247–Ile-267.

It is found in the cell membrane. This is an uncharacterized protein from Bacillus subtilis (strain 168).